Reading from the N-terminus, the 919-residue chain is Isoleucine--tRNA ligase (919 aa).

The 'HIGH' region motif lies at 59–69 (PYANGHLHIGH). Residue E570 coordinates L-isoleucyl-5'-AMP. Residues 611-615 (KMSKS) carry the 'KMSKS' region motif. K614 lines the ATP pocket. Residues C893, C896, C908, and C911 each coordinate Zn(2+).

This sequence belongs to the class-I aminoacyl-tRNA synthetase family. IleS type 1 subfamily. In terms of assembly, monomer. Requires Zn(2+) as cofactor.

It localises to the cytoplasm. It catalyses the reaction tRNA(Ile) + L-isoleucine + ATP = L-isoleucyl-tRNA(Ile) + AMP + diphosphate. Catalyzes the attachment of isoleucine to tRNA(Ile). As IleRS can inadvertently accommodate and process structurally similar amino acids such as valine, to avoid such errors it has two additional distinct tRNA(Ile)-dependent editing activities. One activity is designated as 'pretransfer' editing and involves the hydrolysis of activated Val-AMP. The other activity is designated 'posttransfer' editing and involves deacylation of mischarged Val-tRNA(Ile). In Campylobacter curvus (strain 525.92), this protein is Isoleucine--tRNA ligase.